Consider the following 254-residue polypeptide: Probable transcriptional regulatory protein Cyan7425_4347 (254 aa).

It belongs to the TACO1 family.

It is found in the cytoplasm. The polypeptide is Probable transcriptional regulatory protein Cyan7425_4347 (Cyanothece sp. (strain PCC 7425 / ATCC 29141)).